The primary structure comprises 199 residues: MIISAKFITSLVVKFDENLSSNFSEVAFLGRSNVGKSSLINSLCKQKNLAKSSATPGKTQLINFFEVTCKRNEEKFNINFIDLPGFGYAKVSKNLKEIWNQNLDEFLKFRTSIKLFIHLIDSRHTHLEIDVNLNDYLKRFLRPDQKILKVFTKCDKLNQSEKARLKNEFKDSILVSNLNKFGLDSLEDVIINQTLGFDK.

An EngB-type G domain is found at 22 to 196; sequence NFSEVAFLGR…EDVIINQTLG (175 aa). GTP contacts are provided by residues 30–37, 57–61, 82–85, 152–155, and 175–177; these read GRSNVGKS, GKTQL, DLPG, TKCD, and VSN. Mg(2+)-binding residues include Ser37 and Thr59.

This sequence belongs to the TRAFAC class TrmE-Era-EngA-EngB-Septin-like GTPase superfamily. EngB GTPase family. Mg(2+) is required as a cofactor.

Its function is as follows. Necessary for normal cell division and for the maintenance of normal septation. The protein is Probable GTP-binding protein EngB of Campylobacter jejuni subsp. doylei (strain ATCC BAA-1458 / RM4099 / 269.97).